The primary structure comprises 239 residues: Sugar fermentation stimulation protein homolog (239 aa).

Belongs to the SfsA family.

In Microcystis aeruginosa (strain NIES-843 / IAM M-2473), this protein is Sugar fermentation stimulation protein homolog.